We begin with the raw amino-acid sequence, 430 residues long: Tol-Pal system protein TolB (430 aa).

The signal sequence occupies residues 1 to 21 (MKQALRVAFGFLMLWAAVLHA).

It belongs to the TolB family. As to quaternary structure, the Tol-Pal system is composed of five core proteins: the inner membrane proteins TolA, TolQ and TolR, the periplasmic protein TolB and the outer membrane protein Pal. They form a network linking the inner and outer membranes and the peptidoglycan layer.

The protein resides in the periplasm. Functionally, part of the Tol-Pal system, which plays a role in outer membrane invagination during cell division and is important for maintaining outer membrane integrity. TolB occupies a key intermediary position in the Tol-Pal system because it communicates directly with both membrane-embedded components, Pal in the outer membrane and TolA in the inner membrane. This chain is Tol-Pal system protein TolB, found in Salmonella choleraesuis (strain SC-B67).